Here is a 658-residue protein sequence, read N- to C-terminus: DNA mismatch repair protein MutL (658 aa).

Disordered regions lie at residues 114 to 137 and 437 to 456; these read RQND…PTAA and RFGN…PLSD. Over residues 442-456 the composition is skewed to polar residues; it reads PSETPAPQTDTPLSD.

It belongs to the DNA mismatch repair MutL/HexB family.

This protein is involved in the repair of mismatches in DNA. It is required for dam-dependent methyl-directed DNA mismatch repair. May act as a 'molecular matchmaker', a protein that promotes the formation of a stable complex between two or more DNA-binding proteins in an ATP-dependent manner without itself being part of a final effector complex. This Neisseria meningitidis serogroup B (strain ATCC BAA-335 / MC58) protein is DNA mismatch repair protein MutL.